We begin with the raw amino-acid sequence, 168 residues long: Nicotinamide-nucleotide adenylyltransferase (168 aa).

Belongs to the archaeal NMN adenylyltransferase family.

It is found in the cytoplasm. The enzyme catalyses beta-nicotinamide D-ribonucleotide + ATP + H(+) = diphosphate + NAD(+). The protein operates within cofactor biosynthesis; NAD(+) biosynthesis; NAD(+) from nicotinamide D-ribonucleotide: step 1/1. This Methanocorpusculum labreanum (strain ATCC 43576 / DSM 4855 / Z) protein is Nicotinamide-nucleotide adenylyltransferase.